A 1971-amino-acid chain; its full sequence is Germinal-center associated nuclear protein (1971 aa).

2 disordered regions span residues 1-50 (MHPV…KSLA) and 214-406 (PAFA…RGKS). Residues 8–29 (GGQQPSAFAVSSSTTGTYQTKS) are compositionally biased toward polar residues. Arginine 32 is modified (asymmetric dimethylarginine). The FG-repeats stretch occupies residues 33–335 (FGQPSLFGQN…RPRGGTLFGR (303 aa)). Composition is skewed to polar residues over residues 38–50 (LFGQ…KSLA) and 214–224 (PAFASPLSNQN). The segment covering 232-253 (STSAFGSSNSSFSTFPTASPGS) has biased composition (low complexity). Composition is skewed to basic and acidic residues over residues 288-321 (RKED…DKRP) and 342-359 (KSNK…KESG). The tract at residues 414 to 550 (EEWIYSLGGV…AAGSLLSKSS (137 aa)) is DNA primase. Serine 424 carries the phosphoserine modification. N6-acetyllysine occurs at positions 483 and 484. Phosphoserine occurs at positions 502, 531, and 550. In terms of domain architecture, PCI spans 768-951 (NNENMTKCLQ…RKSVFIGRKL (184 aa)). A coiled-coil region spans residues 1124–1162 (HVAAEEVSMERQRLEEEKQRAEEERLKQERELMLTQLSE). Residues 1793–1840 (RELQLSHGRSGMRSIHPPTSTFPTPLLHVHQKGKKKEESGREGSLSTE) form a disordered region.

It belongs to the SAC3 family. In terms of assembly, component of the nuclear pore complex (NPC)-associated TREX-2 complex (transcription and export complex 2), composed of at least GANP, 2 copies of ENY2, PCID2, SEM1/DSS1, and either centrin CETN2 or centrin CETN3. The TREX-2 complex also associates with ALYREF/ALY. Interacts with RNA polymerase II subunit POLR2A and with the transcription elongation factor SUPT5H/SPT5. Interacts (via FG-repeats) with NXF1; this interaction is not mediated by RNA. Interacts with nuclear envelope proteins NUP62, NUP153 and RANBP2/NUP358; interaction with NUP153 is required for full localization at the nuclear pore complex. Interacts with several RNA helicases, including DHX9, DDX21, and DDX39A/DDX39, and with DNA topoisomerase TOP2A. Directly interacts with AICDA/AID. Interacts with the glucocorticoid receptor NR3C1. Interacts with MCM3. Post-translationally, phosphorylation at Ser-502 is induced in B-cells by CD40-stimulation, but not by bacterial lipopolysaccharide (LPS). In terms of tissue distribution, expressed at low levels in lymphoid organs, including thymus, spleen and lymph nodes. Up-regulated in stimulated B-cells in spleen and Peyer's patch germinal centers (at protein level).

It is found in the cytoplasm. Its subcellular location is the nucleus. It localises to the nucleus envelope. The protein resides in the nuclear pore complex. The protein localises to the nucleoplasm. It is found in the chromosome. The catalysed reaction is L-lysyl-[histone] + acetyl-CoA = N(6)-acetyl-L-lysyl-[histone] + CoA + H(+). Functionally, as a component of the TREX-2 complex, involved in the export of mRNAs to the cytoplasm through the nuclear pores. Through the acetylation of histones, affects the assembly of nucleosomes at immunoglobulin variable region genes and promotes the recruitment and positioning of transcription complex to favor DNA cytosine deaminase AICDA/AID targeting, hence promoting somatic hypermutations. The chain is Germinal-center associated nuclear protein (Mcm3ap) from Mus musculus (Mouse).